The sequence spans 193 residues: Recombination protein RecR (193 aa).

A C4-type zinc finger spans residues 61-76; sequence CASCNALSESEICEIC. Residues 84-170 enclose the Toprim domain; it reads SQLCMVLHPR…TFTKIAQGVP (87 aa).

The protein belongs to the RecR family.

Functionally, may play a role in DNA repair. It seems to be involved in an RecBC-independent recombinational process of DNA repair. It may act with RecF and RecO. This is Recombination protein RecR from Helicobacter pylori (strain Shi470).